The primary structure comprises 161 residues: E3 ubiquitin ligase complex SCF subunit sconC (161 aa).

The interaction with the F-box domain of F-box proteins stretch occupies residues 102-161 (ILAANYLDIKGLLDVGCKTVANMIKGKSPEEIRKTFNIQNDFTPEEEDQIRRENEWAEDR).

It belongs to the SKP1 family. In terms of assembly, component of the SCF (SKP1-CUL1-F-box protein) E3 ubiquitin ligase complexes.

Its pathway is protein modification; protein ubiquitination. Functionally, essential component of the SCF (SKP1-CUL1-F-box protein) E3 ubiquitin ligase complexes, which mediate the ubiquitination and subsequent proteasomal degradation of target proteins. Controls sulfur metabolite repression, probably by mediating the inactivation or degradation of the metR transcription factor. The sequence is that of E3 ubiquitin ligase complex SCF subunit sconC (sconC) from Aspergillus flavus (strain ATCC 200026 / FGSC A1120 / IAM 13836 / NRRL 3357 / JCM 12722 / SRRC 167).